The sequence spans 73 residues: Myosin-IB light chain (73 aa).

2 consecutive EF-hand domains span residues 3 to 38 (DEKT…GLPM) and 38 to 73 (MTEA…VDES). Aspartate 16, aspartate 18, aspartate 20, and glutamate 27 together coordinate Ca(2+).

Myosin I is a dimer of a heavy and a light chain. Inability to self-assemble into filaments. Interacts with myoB. Does not interact with myoC or myoD.

Functionally, functions as the light chain for myosin-B. Binds calcium with submicromolar affinity and may sense physiological calcium changes. The sequence is that of Myosin-IB light chain (mlcB) from Dictyostelium discoideum (Social amoeba).